The following is a 329-amino-acid chain: Beta-ketoacyl-[acyl-carrier-protein] synthase III (329 aa).

Residues cysteine 113 and histidine 255 contribute to the active site. Positions 256–260 are ACP-binding; it reads QANQR. Asparagine 285 is a catalytic residue.

It belongs to the thiolase-like superfamily. FabH family. As to quaternary structure, homodimer.

It is found in the cytoplasm. It catalyses the reaction malonyl-[ACP] + acetyl-CoA + H(+) = 3-oxobutanoyl-[ACP] + CO2 + CoA. Its pathway is lipid metabolism; fatty acid biosynthesis. Functionally, catalyzes the condensation reaction of fatty acid synthesis by the addition to an acyl acceptor of two carbons from malonyl-ACP. Catalyzes the first condensation reaction which initiates fatty acid synthesis and may therefore play a role in governing the total rate of fatty acid production. Possesses both acetoacetyl-ACP synthase and acetyl transacylase activities. Its substrate specificity determines the biosynthesis of branched-chain and/or straight-chain of fatty acids. The polypeptide is Beta-ketoacyl-[acyl-carrier-protein] synthase III (Chlorobium luteolum (strain DSM 273 / BCRC 81028 / 2530) (Pelodictyon luteolum)).